The sequence spans 955 residues: Serine-aspartate repeat-containing protein C (955 aa).

An N-terminal signal peptide occupies residues 1–50 (MNNKKTVTNRKGMIPNRLNKFSIRKYSVGTASILVGTTLIFGLSGHEAKA). The interval 51–166 (AEHTNGELNQ…TPKTTTIKPR (116 aa)) is disordered. The ligand binding A region stretch occupies residues 51-495 (AEHTNGELNQ…GSSTANGDQK (445 aa)). Residues 56–71 (GELNQSKNETTAPSEN) show a composition bias toward polar residues. Basic and acidic residues predominate over residues 72–83 (KTTEKVDSHQLK). A compositionally biased stretch (polar residues) spans 84–114 (DNTQTATADQPKVTMSDSATFKETSSNMQSP). Residues 115–132 (QNATASQSTTQTSNVTTN) are compositionally biased toward low complexity. The segment covering 133–164 (DKSSTTYSNETDKSNLTQAKDVSATPKTTTIK) has biased composition (polar residues). 2 CNA-B domains span residues 496 to 606 (KYNL…YKTP) and 607 to 717 (KYSL…EEET). Residues 678–935 (TQTGTNTTED…NNSNNGTLFG (258 aa)) are disordered. Acidic residues-rich tracts occupy residues 685 to 695 (TEDDKDADGGE) and 712 to 894 (YYEE…DSDS). Residues 918–922 (LPETG) carry the LPXTG sorting signal motif. Low complexity predominate over residues 920-935 (ETGSENNNSNNGTLFG). Threonine 921 is modified (pentaglycyl murein peptidoglycan amidated threonine). The propeptide at 922-955 (GSENNNSNNGTLFGGLFAALGSLLLFGRRKKQNK) is removed by sortase.

Belongs to the serine-aspartate repeat-containing protein (SDr) family. As to quaternary structure, homodimerizes; via N2-Domain. Interacts with host NRXN1; this interaction mediates bacterial attachment to host cells.

The protein localises to the secreted. It localises to the cell wall. In terms of biological role, cell surface-associated calcium-binding protein which plays an important role in adhesion and pathogenesis. Mediates interactions with components of the extracellular matrix such as host NRXN1 to promote bacterial adhesion. The sequence is that of Serine-aspartate repeat-containing protein C (sdrC) from Staphylococcus aureus (strain MW2).